The following is a 961-amino-acid chain: Outer capsid protein VP2 (961 aa).

This sequence belongs to the orbivirus VP2 family.

The protein localises to the virion. The VP2 protein is one of the two proteins (with VP5) which constitute the virus particle outer capsid. It is the major target of the host immunogenic response. Responsible for viral attachment to target host cell, probably by binding to sialic acid. This attachment induces virion internalization predominantly through clathrin-dependent endocytosis. In Antilocapra americana (Pronghorn), this protein is Outer capsid protein VP2 (Segment-2).